A 265-amino-acid chain; its full sequence is Acrosomal protein SP-10 (265 aa).

The first 21 residues, 1-21, serve as a signal peptide directing secretion; the sequence is MNRFLLLMSLYLLGSARGTSS. Residues 62-181 are disordered; sequence LNTLSEHGSS…EQASGAPISS (120 aa). Repeat copies occupy residues 66–70, 71–75, 85–88, 91–95, 110–114, 115–119, 120–123, 125–129, 135–139, 140–144, 145–148, 150–154, 155–159, 160–164, 165–168, and 170–174. Residues 66-95 form a 3 X 5 AA repeats of S-E-H-[GA]-S region; the sequence is SEHGSSEHGSSKHTVAEHTSGEHAESEHAS. Over residues 69–110 the composition is skewed to basic and acidic residues; it reads GSSEHGSSKHTVAEHTSGEHAESEHASGEPAATEHAEGEHTV. The tract at residues 85–168 is 4 X 4 AA repeats of S-G-E-H; that stretch reads SGEHAESEHA…ASGEQPSGEH (84 aa). Positions 110-174 are 9 X 5 AA repeats of [SV]-G-E-Q-[PSA]; it reads VGEQPSGEQP…SGEHASGEQA (65 aa). Residues 152 to 163 show a composition bias toward polar residues; the sequence is EQPSGEQASGEQ. N-linked (GlcNAc...) asparagine glycosylation occurs at Asn-258.

In terms of tissue distribution, testis.

It localises to the cytoplasmic vesicle. The protein resides in the secretory vesicle. It is found in the acrosome. The chain is Acrosomal protein SP-10 (ACRV1) from Homo sapiens (Human).